The primary structure comprises 168 residues: Putative insulin-like growth factor 2 antisense gene protein (168 aa).

Disordered regions lie at residues 1 to 91 (MSKR…ERSN) and 108 to 168 (PLRR…RPGK). Basic residues-rich tracts occupy residues 59–70 (AQRRRGSARRGA) and 159–168 (RWRQPGRPGK).

The sequence is that of Putative insulin-like growth factor 2 antisense gene protein (IGF2-AS) from Homo sapiens (Human).